The sequence spans 352 residues: Phosphoribosylformylglycinamidine cyclo-ligase (352 aa).

It belongs to the AIR synthase family.

It localises to the cytoplasm. It catalyses the reaction 2-formamido-N(1)-(5-O-phospho-beta-D-ribosyl)acetamidine + ATP = 5-amino-1-(5-phospho-beta-D-ribosyl)imidazole + ADP + phosphate + H(+). It functions in the pathway purine metabolism; IMP biosynthesis via de novo pathway; 5-amino-1-(5-phospho-D-ribosyl)imidazole from N(2)-formyl-N(1)-(5-phospho-D-ribosyl)glycinamide: step 2/2. In Pseudomonas putida (strain GB-1), this protein is Phosphoribosylformylglycinamidine cyclo-ligase.